The sequence spans 113 residues: Ig heavy chain V-III region A4 (113 aa).

The region spanning 1-113 (EVKLEESGGG…YWGQGTLVTV (113 aa)) is the Ig-like domain. An intrachain disulfide couples Cys22 to Cys98.

The chain is Ig heavy chain V-III region A4 from Mus musculus (Mouse).